A 484-amino-acid polypeptide reads, in one-letter code: MQWEVVIGLETHTQLSTASKIFSGTSTAFGAEPNTQASPVDLALPGVLPVLNRGAVERAIQFGLSIGATIAPRSIFARKNYFYPDLPKGYQISQYEIPVVQGGQITIQVEGKQGVYEKTVNLTRAHLEEDAGKSLHEDFAGMTGIDLNRAGTPLLEIVTEPDMRSSAEAVAYAKALHSLVVWLGICDGNMQEGSFRCDANVSVRPVGQEKFGTRREIKNLNSFRFLQQAIDYEVQWQIAEIEDGREIVQATVLFDPDTGETRAMRTKEDAHDYRYFPDPDLMPLEIDAAWVERVKSELPELPATMQARFVSQYGLSAYDASTITATKALAAYYEAVVTNVGAASAKPAANWVMGEIASQLNREGISIDEAPVRPAQLAKLLARITDGTVSNNTAKKDVFPAMWAGESDGDADAIIAAKGLKQMSDTGELEKIIDDVLAANAKSVEEFRAGKEKAFNALVGQAMKATKGKANPAQVNELLKKKLG.

This sequence belongs to the GatB/GatE family. GatB subfamily. Heterotrimer of A, B and C subunits.

The enzyme catalyses L-glutamyl-tRNA(Gln) + L-glutamine + ATP + H2O = L-glutaminyl-tRNA(Gln) + L-glutamate + ADP + phosphate + H(+). The catalysed reaction is L-aspartyl-tRNA(Asn) + L-glutamine + ATP + H2O = L-asparaginyl-tRNA(Asn) + L-glutamate + ADP + phosphate + 2 H(+). In terms of biological role, allows the formation of correctly charged Asn-tRNA(Asn) or Gln-tRNA(Gln) through the transamidation of misacylated Asp-tRNA(Asn) or Glu-tRNA(Gln) in organisms which lack either or both of asparaginyl-tRNA or glutaminyl-tRNA synthetases. The reaction takes place in the presence of glutamine and ATP through an activated phospho-Asp-tRNA(Asn) or phospho-Glu-tRNA(Gln). The sequence is that of Aspartyl/glutamyl-tRNA(Asn/Gln) amidotransferase subunit B from Cupriavidus metallidurans (strain ATCC 43123 / DSM 2839 / NBRC 102507 / CH34) (Ralstonia metallidurans).